We begin with the raw amino-acid sequence, 1045 residues long: V(D)J recombination-activating protein 1 (1045 aa).

Disordered regions lie at residues 33 to 55 (ERRP…QETY), 67 to 87 (LGSA…KSNV), and 222 to 253 (KRKS…SSGN). Polar residues-rich tracts occupy residues 44–55 (SEVSYNSSQETY) and 69–87 (SAPQ…KSNV). Zn(2+) contacts are provided by C270, H274, C294, C297, H299, C309, H311, C314, C317, C329, C332, C359, C364, H376, and H380. The RING-type zinc finger occupies 294-333 (CLVCEHILSDPVQTSCKHLFCRICILKYIKLMGCYCPSCK). The RAG1-type zinc finger occupies 355 to 384 (LLLKCTVSGCDEEISLGKYSHHISKHKETK). Positions 395-462 (GGRPRQHLLT…QADELEAIME (68 aa)) form a DNA-binding region, NBD. A divalent metal cation contacts are provided by D606, D714, and E968.

Belongs to the RAG1 family. As to quaternary structure, homodimer. Component of the RAG complex composed of core components rag1 and rag2. Mg(2+) serves as cofactor. Requires Mn(2+) as cofactor. As to expression, expressed within the thymus, liver and spleen in juvenile frogs, and within the thymus and bone marrow of adults.

The protein localises to the nucleus. The catalysed reaction is S-ubiquitinyl-[E2 ubiquitin-conjugating enzyme]-L-cysteine + [acceptor protein]-L-lysine = [E2 ubiquitin-conjugating enzyme]-L-cysteine + N(6)-ubiquitinyl-[acceptor protein]-L-lysine.. Functionally, catalytic component of the RAG complex, a multiprotein complex that mediates the DNA cleavage phase during V(D)J recombination. V(D)J recombination assembles a diverse repertoire of immunoglobulin and T-cell receptor genes in developing B and T lymphocytes through rearrangement of different V (variable), in some cases D (diversity), and J (joining) gene segments. In the RAG complex, RAG1 mediates the DNA-binding to the conserved recombination signal sequences (RSS) and catalyzes the DNA cleavage activities by introducing a double-strand break between the RSS and the adjacent coding segment. RAG2 is not a catalytic component but is required for all known catalytic activities. DNA cleavage occurs in 2 steps: a first nick is introduced in the top strand immediately upstream of the heptamer, generating a 3'-hydroxyl group that can attack the phosphodiester bond on the opposite strand in a direct transesterification reaction, thereby creating 4 DNA ends: 2 hairpin coding ends and 2 blunt, 5'-phosphorylated ends. In addition to its endonuclease activity, RAG1 also acts as an E3 ubiquitin-protein ligase that mediates monoubiquitination of histone H3. Histone H3 monoubiquitination is required for the joining step of V(D)J recombination. This chain is V(D)J recombination-activating protein 1 (rag1), found in Xenopus laevis (African clawed frog).